A 146-amino-acid polypeptide reads, in one-letter code: uncharacterized protein (146 aa).

The N-acetyltransferase domain occupies 7 to 146 (LDINYKTDEL…DGHDVLVWTP (140 aa)).

This is an uncharacterized protein from Staphylococcus saprophyticus subsp. saprophyticus (strain ATCC 15305 / DSM 20229 / NCIMB 8711 / NCTC 7292 / S-41).